The sequence spans 485 residues: Predicted GPI-anchored protein 27 (485 aa).

An N-terminal signal peptide occupies residues 1–20 (MHFTSSLLATLIWFTLPVQS). Residues Asn30, Asn86, Asn96, and Asn444 are each glycosylated (N-linked (GlcNAc...) asparagine). The GPI-anchor amidated glycine moiety is linked to residue Gly467. Positions 468–485 (LVLVSSGVLLGTCLLFIL) are cleaved as a propeptide — removed in mature form.

The protein localises to the cell membrane. This is Predicted GPI-anchored protein 27 (PGA27) from Candida albicans (strain SC5314 / ATCC MYA-2876) (Yeast).